The chain runs to 87 residues: Cytochrome c6 (87 aa).

The heme c site is built by C14, C17, H18, and M58.

The protein belongs to the cytochrome c family. PetJ subfamily. Monomer. Post-translationally, binds 1 heme c group covalently per subunit.

Its subcellular location is the cellular thylakoid lumen. Its function is as follows. Functions as an electron carrier between membrane-bound cytochrome b6-f and photosystem I in oxygenic photosynthesis. This Parathermosynechococcus lividus (Thermostichus lividus) protein is Cytochrome c6 (petJ).